The primary structure comprises 88 residues: Small ribosomal subunit protein bS20 (88 aa).

The protein belongs to the bacterial ribosomal protein bS20 family.

Its function is as follows. Binds directly to 16S ribosomal RNA. The chain is Small ribosomal subunit protein bS20 from Legionella pneumophila (strain Paris).